The sequence spans 75 residues: Psi-conotoxin PIIIE (75 aa).

The signal sequence occupies residues 1 to 19; it reads MSKLGALLTICLLLFPITA. Positions 20 to 50 are excised as a propeptide; that stretch reads LLMDGDQPADRPAERMDYDISSEVHRLLERR. 4-hydroxyproline occurs at positions 52, 53, and 64. Intrachain disulfides connect C54-C66, C55-C71, and C60-C72. G74 carries the glycine amide modification.

As to expression, expressed by the venom duct.

The protein localises to the secreted. Its function is as follows. Psi-conotoxins act on postsynaptic membranes, and act as non-competitive antagonist of nicotinic acetylcholine receptors (nAChR). Is more toxic than Psi-conotoxin PIIIF. In vivo, has paralytic activity when injected intraperitoneally into goldfish. The sequence is that of Psi-conotoxin PIIIE from Conus purpurascens (Purple cone).